Reading from the N-terminus, the 211-residue chain is Potassium-transporting ATPase KdpC subunit (211 aa).

The helical transmembrane segment at 13-35 threads the bilayer; the sequence is VVTMVLTGLLYPLAVTGLAQLLF.

The protein belongs to the KdpC family. In terms of assembly, the system is composed of three essential subunits: KdpA, KdpB and KdpC.

It localises to the cell inner membrane. Part of the high-affinity ATP-driven potassium transport (or Kdp) system, which catalyzes the hydrolysis of ATP coupled with the electrogenic transport of potassium into the cytoplasm. This subunit acts as a catalytic chaperone that increases the ATP-binding affinity of the ATP-hydrolyzing subunit KdpB by the formation of a transient KdpB/KdpC/ATP ternary complex. The protein is Potassium-transporting ATPase KdpC subunit of Myxococcus xanthus (strain DK1622).